The primary structure comprises 328 residues: Malate dehydrogenase (328 aa).

11 to 17 is a binding site for NAD(+); it reads GAAGQIG. Residues Arg-94 and Arg-100 each coordinate substrate. Residues Asn-107, Gln-114, and 131–133 contribute to the NAD(+) site; that span reads VGN. Substrate is bound by residues Asn-133 and Arg-164. The Proton acceptor role is filled by His-189.

The protein belongs to the LDH/MDH superfamily. MDH type 2 family.

It carries out the reaction (S)-malate + NAD(+) = oxaloacetate + NADH + H(+). Its function is as follows. Catalyzes the reversible oxidation of malate to oxaloacetate. This Acinetobacter baumannii (strain AB0057) protein is Malate dehydrogenase.